Here is a 463-residue protein sequence, read N- to C-terminus: Mitochondrial dynamics protein MID51 (463 aa).

The Mitochondrial intermembrane segment spans residues 1-23 (MAGAGERKGKKDDNGIGTAIDFV). The helical transmembrane segment at 24–46 (LSNARLVLGVGGAAMLGIATLAV) threads the bilayer. The Cytoplasmic segment spans residues 47 to 463 (KRMYDRAISA…LSEPEVLLQT (417 aa)). The interval 49–195 (MYDRAISAPT…LSGSLYDDLQ (147 aa)) is dimerization. Residues Ser-55, Ser-59, Ser-79, and Ser-94 each carry the phosphoserine modification. A disordered region spans residues 57–77 (PTSPTRLSHSGKRSWEEPNWM). The segment at 160–169 (AAVDICAELR) is important for interaction with DNM1L. ADP contacts are provided by Ser-187, Ser-189, and His-201. The segment at 234 to 243 (RRENPEYFPR) is important for interaction with DNM1L. Residues Ser-340, Arg-342, and Lys-368 each coordinate ADP.

It belongs to the MID49/MID51 family. As to quaternary structure, homodimer. Interacts with DNM1L.

Its subcellular location is the mitochondrion outer membrane. Mitochondrial outer membrane protein which regulates mitochondrial fission/fusion dynamics. Promotes the recruitment and association of the fission mediator dynamin-related protein 1 (DNM1L) to the mitochondrial surface independently of the mitochondrial fission FIS1 and MFF proteins. Regulates DNM1L GTPase activity and DNM1L oligomerization. Binds ADP and can also bind GDP, although with lower affinity. Does not bind CDP, UDP, ATP, AMP or GTP. Inhibits DNM1L GTPase activity in the absence of bound ADP. Requires ADP to stimulate DNM1L GTPase activity and the assembly of DNM1L into long, oligomeric tubules with a spiral pattern, as opposed to the ring-like DNM1L oligomers observed in the absence of bound ADP. Does not require ADP for its function in recruiting DNM1L. The polypeptide is Mitochondrial dynamics protein MID51 (Mief1) (Rattus norvegicus (Rat)).